We begin with the raw amino-acid sequence, 266 residues long: Hydroxyethylthiazole kinase (266 aa).

Residue Met43 coordinates substrate. Positions 119 and 166 each coordinate ATP. Residue Gly193 coordinates substrate.

The protein belongs to the Thz kinase family. Requires Mg(2+) as cofactor.

The enzyme catalyses 5-(2-hydroxyethyl)-4-methylthiazole + ATP = 4-methyl-5-(2-phosphooxyethyl)-thiazole + ADP + H(+). It functions in the pathway cofactor biosynthesis; thiamine diphosphate biosynthesis; 4-methyl-5-(2-phosphoethyl)-thiazole from 5-(2-hydroxyethyl)-4-methylthiazole: step 1/1. In terms of biological role, catalyzes the phosphorylation of the hydroxyl group of 4-methyl-5-beta-hydroxyethylthiazole (THZ). The polypeptide is Hydroxyethylthiazole kinase (Methanococcus vannielii (strain ATCC 35089 / DSM 1224 / JCM 13029 / OCM 148 / SB)).